The primary structure comprises 132 residues: Interleukin-13 (132 aa).

An N-terminal signal peptide occupies residues 1 to 18; that stretch reads MALLLTTVIALTCLGGFA. 4 N-linked (GlcNAc...) asparagine glycosylation sites follow: Asn38, Asn49, Asn57, and Asn72. Disulfide bonds link Cys48–Cys76 and Cys64–Cys90.

It belongs to the IL-4/IL-13 family. As to quaternary structure, interacts with IL13RA2.

The protein resides in the secreted. Cytokine that plays important roles in allergic inflammation and immune response to parasite infection. Synergizes with IL2 in regulating interferon-gamma synthesis. Stimulates B-cell proliferation, and activation of eosinophils, basophils, and mast cells. Plays an important role in controlling IL33 activity by modulating the production of transmembrane and soluble forms of interleukin-1 receptor-like 1/IL1RL1. Displays the capacity to antagonize Th1-driven proinflammatory immune response and downregulates synthesis of many proinflammatory cytokines including IL1, IL6, IL10, IL12 and TNF-alpha through a mechanism that partially involves suppression of NF-kappa-B. Also functions on nonhematopoietic cells, including endothelial cells where it induces vascular cell adhesion protein 1/VCAM1, which is important in the recruitment of eosinophils. Exerts its biological effects through its receptors which comprises the IL4R chain and the IL13RA1 chain, to activate JAK1 and TYK2, leading to the activation of STAT6. Aside from IL13RA1, another receptor IL13RA2 acts as a high affinity decoy for IL13 and mediates internalization and depletion of extracellular IL13. The polypeptide is Interleukin-13 (IL13) (Macaca mulatta (Rhesus macaque)).